The following is a 563-amino-acid chain: Probable trehalase (563 aa).

Substrate is bound by residues Arg154, 161–162 (WD), Asn198, 207–209 (RSQ), 274–276 (RPE), and Gly307. Catalysis depends on proton donor/acceptor residues Asp309 and Glu517. Substrate is bound at residue Glu532.

It belongs to the glycosyl hydrolase 37 family.

The enzyme catalyses alpha,alpha-trehalose + H2O = alpha-D-glucose + beta-D-glucose. In terms of biological role, involved in the regulation of trehalose content by hydrolyzing trehalose to glucose. This is Probable trehalase from Oryza sativa subsp. japonica (Rice).